The primary structure comprises 385 residues: Leucine aminopeptidase 1 (385 aa).

The signal sequence occupies residues 1-20 (MKLPSLLSLGVAASTTIVAA). Residues 21–87 (VPDQKPIGDT…FPKTFAQTTV (67 aa)) constitute a propeptide that is removed on maturation. Residue asparagine 177 is glycosylated (N-linked (GlcNAc...) asparagine). Histidine 185, aspartate 204, glutamate 243, and aspartate 270 together coordinate Zn(2+). Cysteine 319 and cysteine 323 are joined by a disulfide. Histidine 352 serves as a coordination point for Zn(2+).

The protein belongs to the peptidase M28 family. M28E subfamily. Monomer. Zn(2+) serves as cofactor.

It is found in the secreted. Extracellular aminopeptidase that allows assimilation of proteinaceous substrates. The sequence is that of Leucine aminopeptidase 1 (LAP1) from Ajellomyces capsulatus (strain NAm1 / WU24) (Darling's disease fungus).